The chain runs to 338 residues: Aspartate carbamoyltransferase catalytic subunit (338 aa).

Carbamoyl phosphate-binding residues include Arg57 and Thr58. Lys86 serves as a coordination point for L-aspartate. Positions 107, 135, and 138 each coordinate carbamoyl phosphate. Residues Arg172 and Arg234 each contribute to the L-aspartate site. Carbamoyl phosphate is bound by residues Leu274 and Pro275.

It belongs to the aspartate/ornithine carbamoyltransferase superfamily. ATCase family. Heterododecamer (2C3:3R2) of six catalytic PyrB chains organized as two trimers (C3), and six regulatory PyrI chains organized as three dimers (R2).

It catalyses the reaction carbamoyl phosphate + L-aspartate = N-carbamoyl-L-aspartate + phosphate + H(+). It functions in the pathway pyrimidine metabolism; UMP biosynthesis via de novo pathway; (S)-dihydroorotate from bicarbonate: step 2/3. In terms of biological role, catalyzes the condensation of carbamoyl phosphate and aspartate to form carbamoyl aspartate and inorganic phosphate, the committed step in the de novo pyrimidine nucleotide biosynthesis pathway. This is Aspartate carbamoyltransferase catalytic subunit from Cellvibrio japonicus (strain Ueda107) (Pseudomonas fluorescens subsp. cellulosa).